Reading from the N-terminus, the 372-residue chain is Carbamoyl phosphate synthase small chain (372 aa).

The CPSase stretch occupies residues 1 to 186 (MTYCKRGTEG…IHQNNSPDII (186 aa)). Ser-52, Gly-233, and Gly-235 together coordinate L-glutamine. The Glutamine amidotransferase type-1 domain occupies 185–372 (IIVLVDCGIK…KKMVIKDEGN (188 aa)). Cys-261 (nucleophile) is an active-site residue. Residues Leu-262, Gln-265, Asn-303, Gly-305, and Tyr-306 each coordinate L-glutamine. Active-site residues include His-345 and Glu-347.

Belongs to the CarA family. In terms of assembly, composed of two chains; the small (or glutamine) chain promotes the hydrolysis of glutamine to ammonia, which is used by the large (or ammonia) chain to synthesize carbamoyl phosphate. Tetramer of heterodimers (alpha,beta)4.

The enzyme catalyses hydrogencarbonate + L-glutamine + 2 ATP + H2O = carbamoyl phosphate + L-glutamate + 2 ADP + phosphate + 2 H(+). It carries out the reaction L-glutamine + H2O = L-glutamate + NH4(+). Its pathway is amino-acid biosynthesis; L-arginine biosynthesis; carbamoyl phosphate from bicarbonate: step 1/1. It participates in pyrimidine metabolism; UMP biosynthesis via de novo pathway; (S)-dihydroorotate from bicarbonate: step 1/3. Its function is as follows. Small subunit of the glutamine-dependent carbamoyl phosphate synthetase (CPSase). CPSase catalyzes the formation of carbamoyl phosphate from the ammonia moiety of glutamine, carbonate, and phosphate donated by ATP, constituting the first step of 2 biosynthetic pathways, one leading to arginine and/or urea and the other to pyrimidine nucleotides. The small subunit (glutamine amidotransferase) binds and cleaves glutamine to supply the large subunit with the substrate ammonia. This Metallosphaera sedula (strain ATCC 51363 / DSM 5348 / JCM 9185 / NBRC 15509 / TH2) protein is Carbamoyl phosphate synthase small chain.